Consider the following 261-residue polypeptide: 1-(5-phosphoribosyl)-5-[(5-phosphoribosylamino)methylideneamino] imidazole-4-carboxamide isomerase (261 aa).

The Proton acceptor role is filled by Asp8. Asp130 (proton donor) is an active-site residue.

Belongs to the HisA/HisF family.

It localises to the cytoplasm. It catalyses the reaction 1-(5-phospho-beta-D-ribosyl)-5-[(5-phospho-beta-D-ribosylamino)methylideneamino]imidazole-4-carboxamide = 5-[(5-phospho-1-deoxy-D-ribulos-1-ylimino)methylamino]-1-(5-phospho-beta-D-ribosyl)imidazole-4-carboxamide. It participates in amino-acid biosynthesis; L-histidine biosynthesis; L-histidine from 5-phospho-alpha-D-ribose 1-diphosphate: step 4/9. The chain is 1-(5-phosphoribosyl)-5-[(5-phosphoribosylamino)methylideneamino] imidazole-4-carboxamide isomerase from Prosthecochloris aestuarii (strain DSM 271 / SK 413).